The following is a 462-amino-acid chain: UPF0236 protein TTE2489 (462 aa).

It belongs to the UPF0236 family.

The polypeptide is UPF0236 protein TTE2489 (Caldanaerobacter subterraneus subsp. tengcongensis (strain DSM 15242 / JCM 11007 / NBRC 100824 / MB4) (Thermoanaerobacter tengcongensis)).